A 322-amino-acid chain; its full sequence is Arginase-1 (322 aa).

The residue at position 17 (Lys17) is an N6-succinyllysine. 2 positions are modified to phosphoserine: Ser62 and Ser72. Lys75 carries the post-translational modification N6-succinyllysine. Positions 101, 124, 126, and 128 each coordinate Mn(2+). Substrate-binding positions include 126–130 and 137–139; these read HTDIN and SGN. Ser163 carries the phosphoserine modification. Asp183 is a binding site for substrate. Ser217 carries the post-translational modification Phosphoserine. Asp232 and Asp234 together coordinate Mn(2+). Residues Thr246 and Glu277 each contribute to the substrate site.

This sequence belongs to the arginase family. In terms of assembly, homotrimer. Interacts with CMTM6. It depends on Mn(2+) as a cofactor. Within the immune system initially reported to be selectively expressed in granulocytes (polymorphonuclear leukocytes [PMNs]). Also detected in macrophages mycobacterial granulomas. Expressed in group2 innate lymphoid cells (ILC2s) during lung disease.

The protein localises to the cytoplasm. Its subcellular location is the cytoplasmic granule. It carries out the reaction L-arginine + H2O = urea + L-ornithine. It functions in the pathway nitrogen metabolism; urea cycle; L-ornithine and urea from L-arginine: step 1/1. In terms of biological role, key element of the urea cycle converting L-arginine to urea and L-ornithine, which is further metabolized into metabolites proline and polyamides that drive collagen synthesis and bioenergetic pathways critical for cell proliferation, respectively; the urea cycle takes place primarily in the liver and, to a lesser extent, in the kidneys. Functions in L-arginine homeostasis in nonhepatic tissues characterized by the competition between nitric oxide synthase (NOS) and arginase for the available intracellular substrate arginine. Arginine metabolism is a critical regulator of innate and adaptive immune responses. Involved in an antimicrobial effector pathway in polymorphonuclear granulocytes (PMN). Upon PMN cell death is liberated from the phagolysosome and depletes arginine in the microenvironment leading to suppressed T cell and natural killer (NK) cell proliferation and cytokine secretion. In group 2 innate lymphoid cells (ILC2s) promotes acute type 2 inflammation in the lung and is involved in optimal ILC2 proliferation but not survival. In humans, the immunological role in the monocytic/macrophage/dendritic cell (DC) lineage is unsure. This Homo sapiens (Human) protein is Arginase-1 (ARG1).